Consider the following 414-residue polypeptide: Eukaryotic initiation factor 4A-III-B (414 aa).

The Q motif signature appears at 41 to 69 (PTFDTMGLREDLLRGIYAYGFEKPSAIQQ). ATP is bound by residues lysine 63, glutamine 68, 85-92 (SQSGTGKT), and 88-93 (GTGKTA). The Helicase ATP-binding domain occupies 72-242 (IKQIIKGRDV…NKFMTDPIRI (171 aa)). The short motif at 190–193 (DEAD) is the DEAD box element. The Helicase C-terminal domain maps to 253 to 414 (GIKQFFVAVE…EMPMNVADLI (162 aa)). Residues aspartate 345 and 370–374 (RSGRY) contribute to the ATP site.

This sequence belongs to the DEAD box helicase family. As to quaternary structure, identified in the spliceosome C complex. Part of the mRNA splicing-dependent exon junction complex (EJC) complex; the core complex contains casc3, eif4a3, magoh and rbm8a.

It is found in the nucleus. The protein localises to the nucleus speckle. The protein resides in the cytoplasm. It catalyses the reaction ATP + H2O = ADP + phosphate + H(+). ATP-dependent RNA helicase. Involved in pre-mRNA splicing as component of the spliceosome. Core component of the splicing-dependent multiprotein exon junction complex (EJC) deposited at splice junctions on mRNAs. The EJC is a dynamic structure consisting of core proteins and several peripheral nuclear and cytoplasmic associated factors that join the complex only transiently either during EJC assembly or during subsequent mRNA metabolism. The EJC marks the position of the exon-exon junction in the mature mRNA for the gene expression machinery and the core components remain bound to spliced mRNAs throughout all stages of mRNA metabolism thereby influencing downstream processes including nuclear mRNA export, subcellular mRNA localization, translation efficiency and nonsense-mediated mRNA decay (NMD). Binds spliced mRNA in sequence-independent manner, 20-24 nucleotides upstream of mRNA exon-exon junctions. Involved in craniofacial development. When overexpressed, induces epidermis in dissociated cells that would otherwise adopt a neural fate, a process that requires an active BMP signaling pathway. In Xenopus laevis (African clawed frog), this protein is Eukaryotic initiation factor 4A-III-B (eif4a3-b).